Here is a 922-residue protein sequence, read N- to C-terminus: Golgi-associated RAB2 interactor protein 5B (922 aa).

6 disordered regions span residues 244–264 (DVRK…DRTH), 292–317 (QSSP…SPSH), 373–404 (TPYS…KAPS), 424–597 (AVPA…TQET), 758–830 (QPES…LRPS), and 842–869 (ATAR…LATV). Residues 292 to 305 (QSSPKACTSASDEA) show a composition bias toward polar residues. The span at 431–441 (KPPPGLAPPQK) shows a compositional bias: pro residues. Composition is skewed to low complexity over residues 442-458 (APAA…VPAP) and 471-495 (KAPA…ASAV). The span at 496–507 (PAPPQKTPPPSQ) shows a compositional bias: pro residues. Residues 758–788 (QPESHTWVKEGKRPWGEMKEQPWGEMKEPPW) are compositionally biased toward basic and acidic residues.

Belongs to the GARIN family.

This is Golgi-associated RAB2 interactor protein 5B from Homo sapiens (Human).